A 244-amino-acid chain; its full sequence is Glutathione-independent glyoxalase hsp3101 (244 aa).

Active-site residues include cysteine 139, histidine 140, and glutamate 173.

It belongs to the peptidase C56 family. HSP31-like subfamily.

It is found in the cytoplasm. Its subcellular location is the nucleus. The catalysed reaction is methylglyoxal + H2O = (R)-lactate + H(+). Functionally, catalyzes the conversion of methylglyoxal (MG) to D-lactate in a single glutathione (GSH)-independent step. May play a role in detoxifying endogenously produced glyoxals. Involved in protection against reactive oxygen species (ROS). In Schizosaccharomyces pombe (strain 972 / ATCC 24843) (Fission yeast), this protein is Glutathione-independent glyoxalase hsp3101.